The sequence spans 254 residues: 4-hydroxy-tetrahydrodipicolinate reductase (254 aa).

Residue 13 to 18 (GAAGRM) coordinates NAD(+). Arginine 39 is a binding site for NADP(+). NAD(+)-binding positions include 86–88 (GTT) and 110–113 (AANT). The active-site Proton donor/acceptor is the histidine 143. Position 144 (histidine 144) interacts with (S)-2,3,4,5-tetrahydrodipicolinate. The active-site Proton donor is the lysine 147. 153-154 (GT) contributes to the (S)-2,3,4,5-tetrahydrodipicolinate binding site.

Belongs to the DapB family.

It is found in the cytoplasm. It catalyses the reaction (S)-2,3,4,5-tetrahydrodipicolinate + NAD(+) + H2O = (2S,4S)-4-hydroxy-2,3,4,5-tetrahydrodipicolinate + NADH + H(+). The catalysed reaction is (S)-2,3,4,5-tetrahydrodipicolinate + NADP(+) + H2O = (2S,4S)-4-hydroxy-2,3,4,5-tetrahydrodipicolinate + NADPH + H(+). Its pathway is amino-acid biosynthesis; L-lysine biosynthesis via DAP pathway; (S)-tetrahydrodipicolinate from L-aspartate: step 4/4. Its function is as follows. Catalyzes the conversion of 4-hydroxy-tetrahydrodipicolinate (HTPA) to tetrahydrodipicolinate. This is 4-hydroxy-tetrahydrodipicolinate reductase from Zymomonas mobilis subsp. mobilis (strain ATCC 31821 / ZM4 / CP4).